The sequence spans 842 residues: Protein P (842 aa).

Residues 1–177 (MPLSYQHFRR…FCGSPYTWEQ (177 aa)) are terminal protein domain (TP). Residues 178-345 (DLQHGAFLDG…YCLSHLVNLL (168 aa)) form a spacer region. A disordered region spans residues 184-238 (FLDGPSRVGKEPFRQQSSRIPSRSPVGPSIQSKYQQSRLGLQSQKGPLARGQQGR). Low complexity predominate over residues 197 to 208 (RQQSSRIPSRSP). Over residues 212–228 (SIQSKYQQSRLGLQSQK) the composition is skewed to polar residues. The segment at 346-689 (QDWGPCTEHG…YMNLYPVARQ (344 aa)) is polymerase/reverse transcriptase domain (RT). A Reverse transcriptase domain is found at 356–599 (EHHIRIPRTP…YSLNFMGYVI (244 aa)). Residues Asp-428, Asp-550, and Asp-551 each coordinate Mg(2+).

Belongs to the hepadnaviridae P protein family.

The catalysed reaction is DNA(n) + a 2'-deoxyribonucleoside 5'-triphosphate = DNA(n+1) + diphosphate. It carries out the reaction Endonucleolytic cleavage to 5'-phosphomonoester.. Activated by host HSP70 and HSP40 in vitro to be able to bind the epsilon loop of the pgRNA. Because deletion of the RNase H region renders the protein partly chaperone-independent, the chaperones may be needed indirectly to relieve occlusion of the RNA-binding site by this domain. Inhibited by several reverse-transcriptase inhibitors: Lamivudine, Adefovir and Entecavir. In terms of biological role, multifunctional enzyme that converts the viral RNA genome into dsDNA in viral cytoplasmic capsids. This enzyme displays a DNA polymerase activity that can copy either DNA or RNA templates, and a ribonuclease H (RNase H) activity that cleaves the RNA strand of RNA-DNA heteroduplexes in a partially processive 3'- to 5'-endonucleasic mode. Neo-synthesized pregenomic RNA (pgRNA) are encapsidated together with the P protein, and reverse-transcribed inside the nucleocapsid. Initiation of reverse-transcription occurs first by binding the epsilon loop on the pgRNA genome, and is initiated by protein priming, thereby the 5'-end of (-)DNA is covalently linked to P protein. Partial (+)DNA is synthesized from the (-)DNA template and generates the relaxed circular DNA (RC-DNA) genome. After budding and infection, the RC-DNA migrates in the nucleus, and is converted into a plasmid-like covalently closed circular DNA (cccDNA). The activity of P protein does not seem to be necessary for cccDNA generation, and is presumably released from (+)DNA by host nuclear DNA repair machinery. In Hepatitis B virus genotype G (isolate IG29227/2000) (HBV-G), this protein is Protein P.